The chain runs to 391 residues: UPF0229 protein BCB4264_A0587 (391 aa).

Residues 1–16 (MGEENQPNYTISQENW) show a composition bias toward polar residues. Disordered regions lie at residues 1–31 (MGEE…RHQE) and 80–117 (HVGQ…GDAA). A compositionally biased stretch (basic and acidic residues) spans 21–31 (KGYDDQQRHQE). The span at 98 to 115 (GSGGQKQKGPGKGQGAGD) shows a compositional bias: gly residues.

The protein belongs to the UPF0229 family.

This Bacillus cereus (strain B4264) protein is UPF0229 protein BCB4264_A0587.